Consider the following 278-residue polypeptide: uncharacterized protein (278 aa).

10 helical membrane passes run 1–21 (MLEILMSLTAAICWAFNGIAY), 30–50 (AFTANFHRTLFATVYFLPLAL), 56–76 (VVIDLQTALVLVISAMLSFYI), 92–112 (IALPASSTYPVYVVLLSTVIY), 116–136 (LSLNALISAILVFVAVYIIYG), 146–166 (LFYALLAAFSWALAILTLDFL), 170–190 (LPVSIVAFVRLLLCLILLSFT), 209–229 (GIFLLLGIMLFITAIKVSSSW), 230–250 (NVVQPSSTSPVFAAIFGAIFL), and 258–278 (LVAGIFVIILAILLLLLPPLQ). 2 consecutive EamA domains span residues 12–136 (ICWA…IIYG) and 154–274 (FSWA…LLLL).

The protein belongs to the EamA transporter family.

It is found in the cell membrane. This is an uncharacterized protein from Archaeoglobus fulgidus (strain ATCC 49558 / DSM 4304 / JCM 9628 / NBRC 100126 / VC-16).